Here is a 54-residue protein sequence, read N- to C-terminus: Photosystem II reaction center protein K (54 aa).

Positions 1-17 (MLLEHVTITLLNNTSFA) are excised as a propeptide. A helical membrane pass occupies residues 29 to 49 (LIDVLPIIPLLFLLLAFVWQA).

The protein belongs to the PsbK family. In terms of assembly, PSII is composed of 1 copy each of membrane proteins PsbA, PsbB, PsbC, PsbD, PsbE, PsbF, PsbH, PsbI, PsbJ, PsbK, PsbL, PsbM, PsbT, PsbY, PsbZ, Psb30/Ycf12, at least 3 peripheral proteins of the oxygen-evolving complex and a large number of cofactors. It forms dimeric complexes.

The protein localises to the plastid. Its subcellular location is the chloroplast thylakoid membrane. Its function is as follows. One of the components of the core complex of photosystem II (PSII). PSII is a light-driven water:plastoquinone oxidoreductase that uses light energy to abstract electrons from H(2)O, generating O(2) and a proton gradient subsequently used for ATP formation. It consists of a core antenna complex that captures photons, and an electron transfer chain that converts photonic excitation into a charge separation. The sequence is that of Photosystem II reaction center protein K from Euglena mutabilis.